The sequence spans 547 residues: Chaperonin GroEL (547 aa).

ATP is bound by residues 30–33 (TLGP), K51, 87–91 (DGTTT), G415, 479–481 (NAA), and D495.

This sequence belongs to the chaperonin (HSP60) family. As to quaternary structure, forms a cylinder of 14 subunits composed of two heptameric rings stacked back-to-back. Interacts with the co-chaperonin GroES.

The protein resides in the cytoplasm. It catalyses the reaction ATP + H2O + a folded polypeptide = ADP + phosphate + an unfolded polypeptide.. Together with its co-chaperonin GroES, plays an essential role in assisting protein folding. The GroEL-GroES system forms a nano-cage that allows encapsulation of the non-native substrate proteins and provides a physical environment optimized to promote and accelerate protein folding. In Cupriavidus metallidurans (strain ATCC 43123 / DSM 2839 / NBRC 102507 / CH34) (Ralstonia metallidurans), this protein is Chaperonin GroEL.